Reading from the N-terminus, the 735-residue chain is Translation initiation factor IF-2, chloroplastic (735 aa).

The region spanning 239-411 (RRAPIVTILG…ILLMADIENY (173 aa)) is the tr-type G domain. Residues 248–255 (GHVDHGKT) form a G1 region. 248–255 (GHVDHGKT) is a GTP binding site. Positions 273–277 (GITQK) are G2. The interval 298–301 (DTPG) is G3. GTP is bound by residues 298–302 (DTPGH) and 352–355 (NKID). A G4 region spans residues 352-355 (NKID). The G5 stretch occupies residues 388-390 (SAS).

Belongs to the TRAFAC class translation factor GTPase superfamily. Classic translation factor GTPase family. IF-2 subfamily.

It is found in the plastid. Its subcellular location is the chloroplast. In terms of biological role, one of the essential components for the initiation of protein synthesis. Protects formylmethionyl-tRNA from spontaneous hydrolysis and promotes its binding to the 30S ribosomal subunits. Also involved in the hydrolysis of GTP during the formation of the 70S ribosomal complex. The protein is Translation initiation factor IF-2, chloroplastic (infB) of Guillardia theta (Cryptophyte).